Here is a 50-residue protein sequence, read N- to C-terminus: Large ribosomal subunit protein bL33 (50 aa).

The protein belongs to the bacterial ribosomal protein bL33 family.

This Mycoplasmopsis synoviae (strain 53) (Mycoplasma synoviae) protein is Large ribosomal subunit protein bL33.